Consider the following 180-residue polypeptide: MFMNLLSQVSNAIFPQVEAAQKMSNRAVAVLRGDVVSGTIWITQNSESDPAVIEGEIKGLTPGLHGFHVHQYGDSTNGCLSAGPHFNPFGKTHGGPNSETRHVGDLGNVEAGADGVAKVHITDKLITLYGANTVIGRSMVVHAGQDDLGQGVGDKAEESAKTGNAGARAACGVIALAAPQ.

The N-terminal stretch at 1–19 is a signal peptide; sequence MFMNLLSQVSNAIFPQVEA. The Cu cation site is built by His-68, His-70, and His-85. Cys-79 and Cys-171 form a disulfide bridge. Zn(2+) contacts are provided by His-85, His-93, His-102, and Asp-105. His-142 is a Cu cation binding site.

This sequence belongs to the Cu-Zn superoxide dismutase family. As to quaternary structure, homodimer. Cu cation serves as cofactor. It depends on Zn(2+) as a cofactor.

The protein localises to the cytoplasm. The enzyme catalyses 2 superoxide + 2 H(+) = H2O2 + O2. Its function is as follows. Destroys radicals which are normally produced within the cells and which are toxic to biological systems. Required for normal brood size. May be involved in regulating mpk-1 phosphorylation downstream of phosphatase ptp-2 during oocyte maturation. This Caenorhabditis briggsae protein is Superoxide dismutase [Cu-Zn].